Consider the following 841-residue polypeptide: GRIP1-associated protein 1 (841 aa).

An N-acetylalanine modification is found at Ala-2. Coiled-coil stretches lie at residues 4–161 (ALSE…YGKE) and 208–641 (EQLQ…NSKS). 2 disordered regions span residues 532 to 551 (AEES…KQCR) and 558 to 580 (LKGK…EERD). Residues Ser-655, Ser-666, Ser-668, Ser-669, Ser-688, Ser-690, Ser-691, and Ser-692 each carry the phosphoserine modification. The segment at 681 to 706 (SSAVPARSLSSSPQAQPPRPAELSDE) is disordered. Low complexity predominate over residues 682–694 (SAVPARSLSSSPQ). 2 coiled-coil regions span residues 701-735 (AELS…LEVS) and 785-814 (DENL…KDME).

In terms of assembly, interacts with GRIP1, GRIP2 and AMPA receptors. Interacts (via C-terminus) with MAPK8/JNK1 and MAP3K1/MEKK1; the interaction promotes MAP3K1-mediated phosphorylation of MAPK8. Interacts (via N-terminus) with RAB4A (in GTP-bound form). Interacts (via C-terminus) with STX12. In terms of processing, proteolytically cleaved by caspase-3. A minor C-terminal proteolytic fragment of 30 kDa is produced. Proteolytic cleavage is required for JNK signaling activation.

The protein resides in the early endosome membrane. It is found in the recycling endosome membrane. It localises to the cell projection. Its subcellular location is the axon. The protein localises to the dendrite. The protein resides in the synapse. Functionally, regulates the endosomal recycling back to the neuronal plasma membrane, possibly by connecting early and late recycling endosomal domains and promoting segregation of recycling endosomes from early endosomal membranes. Involved in the localization of recycling endosomes to dendritic spines, thereby playing a role in the maintenance of dendritic spine morphology. Required for the activity-induced AMPA receptor recycling to dendrite membranes and for long-term potentiation and synaptic plasticity. In terms of biological role, functions as a scaffold protein to facilitate MAP3K1/MEKK1-mediated activation of the JNK1 kinase by phosphorylation, possibly by bringing MAP3K1/MEKK1 and JNK1 in close proximity. This Homo sapiens (Human) protein is GRIP1-associated protein 1.